A 367-amino-acid chain; its full sequence is Serine O-succinyltransferase (367 aa).

Residues 41 to 351 form the AB hydrolase-1 domain; the sequence is NAVLILTGLS…SPQGHDAFLV (311 aa). Positions 48–51 are important for substrate specificity; sequence GLSP. Ser146 functions as the Nucleophile in the catalytic mechanism. Residue Arg215 participates in substrate binding. Catalysis depends on residues Asp313 and His346. Asp347 contributes to the substrate binding site.

Belongs to the AB hydrolase superfamily. MetX family. In terms of assembly, homodimer.

It localises to the cytoplasm. The enzyme catalyses succinyl-CoA + L-serine = O-succinyl-L-serine + CoA. It catalyses the reaction L-homoserine + succinyl-CoA = O-succinyl-L-homoserine + CoA. It participates in amino-acid biosynthesis; L-cysteine biosynthesis; L-cysteine from L-serine: step 1/2. In terms of biological role, transfers a succinyl group from succinyl-CoA to L-serine, forming succinyl-L-serine. In vitro, also has homoserine succinyl transferase activity. The chain is Serine O-succinyltransferase from Frateuria aurantia (strain ATCC 33424 / DSM 6220 / KCTC 2777 / LMG 1558 / NBRC 3245 / NCIMB 13370) (Acetobacter aurantius).